The primary structure comprises 147 residues: Globin, polymeric component P2 (147 aa).

The Globin domain occupies 2 to 146 (PLTADQVAAL…ISDALVAGLE (145 aa)). Residue H96 coordinates heme b.

It belongs to the globin family. In terms of assembly, polymer.

This is Globin, polymeric component P2 from Glycera dibranchiata (Bloodworm).